We begin with the raw amino-acid sequence, 801 residues long: Na(+)/H(+) antiporter subunit A (801 aa).

The next 21 helical transmembrane spans lie at 4 to 21 (LHLAILSPFLFAFIIPFL), 28 to 50 (VHTGWFVLILPVLLFIYFLPMIR), 80 to 102 (GLLFALLITGIGSLVTLYSIFYL), 109 to 128 (LGPFYVYLLMFMGAMLGVVL), 132 to 154 (VMVLYMFWELTSLSSFLLIGYWY), 166 to 188 (SLLITVSGGLCMLGGFILLYLIT), 203 to 222 (IAGHELFIPAMILILLGAFT), 229 to 251 (FYIWLPDAMEAPTPVSAYLHSAT), 266 to 288 (IFAFSAQWFWIVSLVGLFTMVWG), 301 to 323 (ILAFSTVSQLGMIISMLGVSAAA), 338 to 360 (AAIFHLINHATFKGSLFMAVGII), 372 to 394 (LGGLMAIMPITFTISLIGTFSMA), 428 to 450 (VLFPLFAWIGSVFTFIYSMKLLF), 471 to 493 (VGMLVPPVILVALAVSLFFFPNI), 526 to 548 (GVTTELLMTAGIVVIGTIGYLSL), 594 to 616 (YLLYIFAGFIILIGGAFAIKGGF), 626 to 647 (IGVYEIILTLVMISATVATVFA), 654 to 671 (IIALGVVGYTLALFFVIF), 676 to 698 (LALTQLVIETISVALFLLCFYHL), 710 to 732 (FRMTNFIISLGVGVIVTLLGIAS), and 772 to 789 (MFEITVLTIAALGIYSMI).

The protein belongs to the CPA3 antiporters (TC 2.A.63) subunit A family. In terms of assembly, forms a heterooligomeric complex that consists of seven subunits: MrpA, MrpB, MrpC, MrpD, MrpE, MrpF and MrpG.

Its subcellular location is the cell membrane. In terms of biological role, mrp complex is a Na(+)/H(+) antiporter that is considered to be the major Na(+) excretion system in B.subtilis. Has a major role in Na(+) resistance and a minor role in Na(+)- and K(+)-dependent pH homeostasis as compared to TetB. MrpA may be the actual Na(+)/H(+) antiporter, although the six other Mrp proteins are all required for Na(+)/H(+) antiport activity and Na(+) resistance. MrpA is required for initiation of sporulation when external Na(+) concentration increases. Also transports Li(+) but not K(+), Ca(2+) or Mg(2+). In Bacillus subtilis (strain 168), this protein is Na(+)/H(+) antiporter subunit A (mrpA).